The chain runs to 913 residues: Chitin synthase 1 (913 aa).

The tract at residues 1-135 is disordered; it reads MAYRGGGPND…QQPGAQTGGL (135 aa). Asn-25 is a glycosylation site (N-linked (GlcNAc...) asparagine). The span at 41–56 shows a compositional bias: basic and acidic residues; that stretch reads RDPHARGTSPYEHHLG. N-linked (GlcNAc...) asparagine glycosylation is present at Asn-539. 7 helical membrane passes run 566–586, 625–645, 658–678, 712–732, 740–760, 840–860, and 881–901; these read FFFH…WFSL, IINS…FVLA, IASF…SGYL, VILV…FMYL, SFPY…VYAF, TGLV…ITTD, and FLLY…LWFL.

It belongs to the chitin synthase family. Class III subfamily.

It localises to the cell membrane. The catalysed reaction is [(1-&gt;4)-N-acetyl-beta-D-glucosaminyl](n) + UDP-N-acetyl-alpha-D-glucosamine = [(1-&gt;4)-N-acetyl-beta-D-glucosaminyl](n+1) + UDP + H(+). Its function is as follows. Polymerizes chitin, a structural polymer of the cell wall and septum, by transferring the sugar moiety of UDP-GlcNAc to the non-reducing end of the growing chitin polymer. Plays a role in cell wall integrity and is involved in tolerance to hyperosmotic conditions. Required to successfully penetrate the host plants and thus plays a key role in pathogenicity. The sequence is that of Chitin synthase 1 from Verticillium dahliae (strain VdLs.17 / ATCC MYA-4575 / FGSC 10137) (Verticillium wilt).